A 251-amino-acid polypeptide reads, in one-letter code: MRILLSNDDGVHAPGLQCLAAALRTVAEVHVVAPDRDRSGASNSLTLARPLRAMRLDNGDVRVDGTPTDCVHLAITGLMEEEPDMVISGINSGANMGDDVLYSGTVAAAMEGRFLGLPAIAVSINSHEGKHYDSAARAVLDLLKRLGHMPLPANTILNVNVPHLPWSEIQGVQATRLGHRHKSEPMIRSHDPRGRPIYWVGAAGPEQDAGPGTDFHAVRSGYVSVTPIQVDLTRYDAIDTVANWLRDEDPA.

Residues aspartate 8, aspartate 9, serine 39, and asparagine 91 each coordinate a divalent metal cation.

This sequence belongs to the SurE nucleotidase family. A divalent metal cation serves as cofactor.

Its subcellular location is the cytoplasm. The enzyme catalyses a ribonucleoside 5'-phosphate + H2O = a ribonucleoside + phosphate. Nucleotidase that shows phosphatase activity on nucleoside 5'-monophosphates. The protein is 5'-nucleotidase SurE of Thioalkalivibrio sulfidiphilus (strain HL-EbGR7).